Here is a 161-residue protein sequence, read N- to C-terminus: Large ribosomal subunit protein uL11 (161 aa).

It belongs to the universal ribosomal protein uL11 family. As to quaternary structure, part of the ribosomal stalk of the 50S ribosomal subunit. Interacts with L10 and the large rRNA to form the base of the stalk. L10 forms an elongated spine to which L12 dimers bind in a sequential fashion forming a multimeric L10(L12)X complex.

Forms part of the ribosomal stalk which helps the ribosome interact with GTP-bound translation factors. The polypeptide is Large ribosomal subunit protein uL11 (Methanococcoides burtonii (strain DSM 6242 / NBRC 107633 / OCM 468 / ACE-M)).